Consider the following 142-residue polypeptide: Midkine (142 aa).

Positions 1–21 (MQPRGLLLLLALLLLAAAAEA) are cleaved as a signal peptide. 5 disulfide bridges follow: Cys36-Cys60, Cys44-Cys69, Cys51-Cys73, Cys83-Cys115, and Cys93-Cys125.

Belongs to the pleiotrophin family.

It localises to the cell surface. It is found in the secreted. The protein localises to the extracellular space. Its subcellular location is the extracellular matrix. The protein resides in the basement membrane. Functionally, has mitogenic activity, and neurite extension activity for PC12 cells. This Gallus gallus (Chicken) protein is Midkine (RIHB).